Here is a 471-residue protein sequence, read N- to C-terminus: Ribonuclease 3 (471 aa).

The segment covering 1 to 10 has biased composition (basic residues); the sequence is MGSKVAGKKK. Disordered stretches follow at residues 1–29 and 168–189; these read MGSK…RENI and NLNE…PTKA. Residues 20–29 are compositionally biased toward polar residues; it reads ENGSQQRENI. The span at 172 to 184 shows a compositional bias: acidic residues; the sequence is KEDEEEDEGEDSY. One can recognise an RNase III domain in the interval 227–331; sequence LSGSEMINAH…YIGGLMEDDP (105 aa). The DRBM domain maps to 369-437; it reads NAKRQLYSLI…AENALRDKKM (69 aa). Residues 451–471 form a disordered region; that stretch reads SESVLKDPSQKNKKRKFSDTS. A compositionally biased stretch (basic residues) spans 461–471; that stretch reads KNKKRKFSDTS.

The enzyme catalyses Endonucleolytic cleavage to 5'-phosphomonoester.. DsRNA-specific nuclease that cleaves eukaryotic pre-ribosomal RNA at the U3 snoRNP-dependent A0 site in the 5'-external transcribed spacer (ETS) and in the 3'-ETS. In vitro, cleaves synthetic 5'-ETS RNA A0 site in the absence of snoRNA or other factors. Has an essential growth function in addition to pre-rRNA processing. This Saccharomyces cerevisiae (strain ATCC 204508 / S288c) (Baker's yeast) protein is Ribonuclease 3 (RNT1).